A 462-amino-acid chain; its full sequence is Tubulin alpha-4 chain (462 aa).

GTP contacts are provided by glutamine 11, glutamate 82, serine 151, glycine 155, threonine 156, threonine 190, asparagine 217, and asparagine 239. Glutamate 82 lines the Mg(2+) pocket. Glutamate 265 is an active-site residue.

It belongs to the tubulin family. As to quaternary structure, dimer of alpha and beta chains. A typical microtubule is a hollow water-filled tube with an outer diameter of 25 nm and an inner diameter of 15 nM. Alpha-beta heterodimers associate head-to-tail to form protofilaments running lengthwise along the microtubule wall with the beta-tubulin subunit facing the microtubule plus end conferring a structural polarity. Microtubules usually have 13 protofilaments but different protofilament numbers can be found in some organisms and specialized cells. It depends on Mg(2+) as a cofactor.

The protein localises to the cytoplasm. Its subcellular location is the cytoskeleton. It catalyses the reaction GTP + H2O = GDP + phosphate + H(+). Functionally, tubulin is the major constituent of microtubules, a cylinder consisting of laterally associated linear protofilaments composed of alpha- and beta-tubulin heterodimers. Microtubules grow by the addition of GTP-tubulin dimers to the microtubule end, where a stabilizing cap forms. Below the cap, tubulin dimers are in GDP-bound state, owing to GTPase activity of alpha-tubulin. The sequence is that of Tubulin alpha-4 chain (alphaTub67C) from Drosophila melanogaster (Fruit fly).